The sequence spans 1068 residues: Carbamoyl phosphate synthase large chain (1068 aa).

Residues 1–401 are carboxyphosphate synthetic domain; that stretch reads MPRNNDIKKV…ALMKAIRSLE (401 aa). 12 residues coordinate ATP: R129, R169, G175, G176, R208, I210, E215, G241, V242, H243, Q284, and E298. Residues 133–327 form the ATP-grasp 1 domain; sequence KDTMEKIGEP…IAKVTAKIAL (195 aa). Residues Q284, E298, and N300 each coordinate Mg(2+). Residues Q284, E298, and N300 each contribute to the Mn(2+) site. The segment at 402–546 is oligomerization domain; sequence QHVDSLMSYD…YSVFGSENEA (145 aa). The carbamoyl phosphate synthetic domain stretch occupies residues 547–930; sequence AETNPQKKVL…ALYKAFEGAG (384 aa). In terms of domain architecture, ATP-grasp 2 spans 672–862; it reads DEILQKTGIP…IVDLAARIIM (191 aa). ATP is bound by residues R708, K747, L749, E753, G778, V779, H780, S781, Q821, and E833. The Mg(2+) site is built by Q821, E833, and N835. Mn(2+)-binding residues include Q821, E833, and N835. The 138-residue stretch at 931–1068 folds into the MGS-like domain; it reads VELPKYKQMI…PVDIATVKNL (138 aa). The allosteric domain stretch occupies residues 931–1068; sequence VELPKYKQMI…PVDIATVKNL (138 aa).

It belongs to the CarB family. As to quaternary structure, composed of two chains; the small (or glutamine) chain promotes the hydrolysis of glutamine to ammonia, which is used by the large (or ammonia) chain to synthesize carbamoyl phosphate. Tetramer of heterodimers (alpha,beta)4. The cofactor is Mg(2+). Mn(2+) is required as a cofactor.

It carries out the reaction hydrogencarbonate + L-glutamine + 2 ATP + H2O = carbamoyl phosphate + L-glutamate + 2 ADP + phosphate + 2 H(+). It catalyses the reaction hydrogencarbonate + NH4(+) + 2 ATP = carbamoyl phosphate + 2 ADP + phosphate + 2 H(+). It functions in the pathway amino-acid biosynthesis; L-arginine biosynthesis; carbamoyl phosphate from bicarbonate: step 1/1. It participates in pyrimidine metabolism; UMP biosynthesis via de novo pathway; (S)-dihydroorotate from bicarbonate: step 1/3. Functionally, large subunit of the glutamine-dependent carbamoyl phosphate synthetase (CPSase). CPSase catalyzes the formation of carbamoyl phosphate from the ammonia moiety of glutamine, carbonate, and phosphate donated by ATP, constituting the first step of 2 biosynthetic pathways, one leading to arginine and/or urea and the other to pyrimidine nucleotides. The large subunit (synthetase) binds the substrates ammonia (free or transferred from glutamine from the small subunit), hydrogencarbonate and ATP and carries out an ATP-coupled ligase reaction, activating hydrogencarbonate by forming carboxy phosphate which reacts with ammonia to form carbamoyl phosphate. The protein is Carbamoyl phosphate synthase large chain of Agathobacter rectalis (strain ATCC 33656 / DSM 3377 / JCM 17463 / KCTC 5835 / VPI 0990) (Eubacterium rectale).